The chain runs to 475 residues: tRNA modification GTPase MnmE (475 aa).

3 residues coordinate (6S)-5-formyl-5,6,7,8-tetrahydrofolate: arginine 32, glutamate 97, and lysine 136. The TrmE-type G domain occupies 232-396 (GVATVIAGRP…LKSRMSSMVE (165 aa)). GTP is bound by residues 242-247 (NAGKST), 261-267 (SHMPGTT), 286-289 (DTAG), and 377-379 (SAR). Residues serine 246 and threonine 267 each contribute to the Mg(2+) site. (6S)-5-formyl-5,6,7,8-tetrahydrofolate is bound at residue lysine 475.

It belongs to the TRAFAC class TrmE-Era-EngA-EngB-Septin-like GTPase superfamily. TrmE GTPase family. Homodimer. Heterotetramer of two MnmE and two MnmG subunits. It depends on K(+) as a cofactor.

It is found in the cytoplasm. Exhibits a very high intrinsic GTPase hydrolysis rate. Involved in the addition of a carboxymethylaminomethyl (cmnm) group at the wobble position (U34) of certain tRNAs, forming tRNA-cmnm(5)s(2)U34. The polypeptide is tRNA modification GTPase MnmE (Chlorobium phaeobacteroides (strain DSM 266 / SMG 266 / 2430)).